The sequence spans 465 residues: Ubiquitin carboxyl-terminal hydrolase UCH54 (465 aa).

A UCH catalytic domain is found at 11–333; the sequence is EWCLIESNPC…VRFNIIAVMK (323 aa). The Nucleophile role is filled by Cys145. The Proton donor role is filled by His220. The disordered stretch occupies residues 244–293; it reads INADEQNKPNPNNNNNNKDNDNDNNNNNNNNNNNNNNNNNNNNNNNNNNI. A compositionally biased stretch (low complexity) spans 251–292; the sequence is KPNPNNNNNNKDNDNDNNNNNNNNNNNNNNNNNNNNNNNNNN. Residues 432-460 enclose the ULD domain; the sequence is NFYPFIMSSLNLMAKHKLLKDAYQKEKLK.

This sequence belongs to the peptidase C12 family.

It catalyses the reaction Thiol-dependent hydrolysis of ester, thioester, amide, peptide and isopeptide bonds formed by the C-terminal Gly of ubiquitin (a 76-residue protein attached to proteins as an intracellular targeting signal).. Its function is as follows. Thiol protease that recognizes and hydrolyzes a peptide bond at the C-terminal glycine of either ubiquitin or NEDD8. The polypeptide is Ubiquitin carboxyl-terminal hydrolase UCH54 (Plasmodium falciparum (isolate 3D7)).